We begin with the raw amino-acid sequence, 542 residues long: Chaperonin GroEL (542 aa).

ATP is bound by residues 29-32, Lys-50, 86-90, Gly-415, and Asp-495; these read TLGP and DGTTT.

The protein belongs to the chaperonin (HSP60) family. In terms of assembly, forms a cylinder of 14 subunits composed of two heptameric rings stacked back-to-back. Interacts with the co-chaperonin GroES.

The protein resides in the cytoplasm. It catalyses the reaction ATP + H2O + a folded polypeptide = ADP + phosphate + an unfolded polypeptide.. Together with its co-chaperonin GroES, plays an essential role in assisting protein folding. The GroEL-GroES system forms a nano-cage that allows encapsulation of the non-native substrate proteins and provides a physical environment optimized to promote and accelerate protein folding. The polypeptide is Chaperonin GroEL (Flavobacterium psychrophilum (strain ATCC 49511 / DSM 21280 / CIP 103535 / JIP02/86)).